Here is a 126-residue protein sequence, read N- to C-terminus: Small ribosomal subunit protein uS13 (126 aa).

Residues 91–126 (RHRRGLPVRGQRTSTNARTRKGPRRAIAGKKKPGKK) are disordered. A compositionally biased stretch (basic residues) spans 108 to 126 (RTRKGPRRAIAGKKKPGKK).

It belongs to the universal ribosomal protein uS13 family. As to quaternary structure, part of the 30S ribosomal subunit. Forms a loose heterodimer with protein S19. Forms two bridges to the 50S subunit in the 70S ribosome.

Functionally, located at the top of the head of the 30S subunit, it contacts several helices of the 16S rRNA. In the 70S ribosome it contacts the 23S rRNA (bridge B1a) and protein L5 of the 50S subunit (bridge B1b), connecting the 2 subunits; these bridges are implicated in subunit movement. Contacts the tRNAs in the A and P-sites. This Streptomyces coelicolor (strain ATCC BAA-471 / A3(2) / M145) protein is Small ribosomal subunit protein uS13.